A 285-amino-acid chain; its full sequence is Bifunctional protein FolD (285 aa).

NADP(+) contacts are provided by residues 166–168 (GRS), Ser191, and Thr232.

The protein belongs to the tetrahydrofolate dehydrogenase/cyclohydrolase family. As to quaternary structure, homodimer.

The catalysed reaction is (6R)-5,10-methylene-5,6,7,8-tetrahydrofolate + NADP(+) = (6R)-5,10-methenyltetrahydrofolate + NADPH. It catalyses the reaction (6R)-5,10-methenyltetrahydrofolate + H2O = (6R)-10-formyltetrahydrofolate + H(+). It participates in one-carbon metabolism; tetrahydrofolate interconversion. In terms of biological role, catalyzes the oxidation of 5,10-methylenetetrahydrofolate to 5,10-methenyltetrahydrofolate and then the hydrolysis of 5,10-methenyltetrahydrofolate to 10-formyltetrahydrofolate. The polypeptide is Bifunctional protein FolD (Chloroflexus aurantiacus (strain ATCC 29366 / DSM 635 / J-10-fl)).